We begin with the raw amino-acid sequence, 363 residues long: Spore germination protein YndE (363 aa).

The next 10 membrane-spanning stretches (helical) occupy residues 8–28, 41–61, 84–104, 113–133, 149–169, 189–209, 218–238, 273–293, 305–325, and 335–355; these read ITTA…GVLT, DGWI…MIIA, LGHL…AFEV, FFLL…WIGL, MIFP…LGIF, VKTT…VAFM, AVVI…IMVI, FLLV…FYAA, PLSC…MPKN, and TVSH…LVIS.

The protein belongs to the amino acid-polyamine-organocation (APC) superfamily. Spore germination protein (SGP) (TC 2.A.3.9) family.

It is found in the cell membrane. Its function is as follows. Involved in the germinative response to L-alanine. Could be an amino acid transporter. This is Spore germination protein YndE (yndE) from Bacillus subtilis (strain 168).